Reading from the N-terminus, the 397-residue chain is Argininosuccinate synthase (397 aa).

8 to 16 serves as a coordination point for ATP; it reads AYSGGLDTS. L-citrulline is bound by residues tyrosine 86 and serine 91. Glycine 116 is an ATP binding site. L-aspartate is bound by residues threonine 118, asparagine 122, and aspartate 123. Asparagine 122 provides a ligand contact to L-citrulline. L-citrulline contacts are provided by arginine 126, serine 175, serine 184, glutamate 260, and tyrosine 272.

It belongs to the argininosuccinate synthase family. Type 1 subfamily. In terms of assembly, homotetramer.

It is found in the cytoplasm. The catalysed reaction is L-citrulline + L-aspartate + ATP = 2-(N(omega)-L-arginino)succinate + AMP + diphosphate + H(+). It participates in amino-acid biosynthesis; L-arginine biosynthesis; L-arginine from L-ornithine and carbamoyl phosphate: step 2/3. The protein is Argininosuccinate synthase of Clostridium botulinum (strain Kyoto / Type A2).